Consider the following 328-residue polypeptide: Nickel import system permease protein NikB (328 aa).

A run of 6 helical transmembrane segments spans residues 11–31 (LMQM…LMKL), 104–124 (LLIS…LGII), 139–159 (VIST…LLFI), 170–190 (ILSQ…AYII), 229–249 (ILPI…GTVV), and 279–299 (VLFI…LTLL). The ABC transmembrane type-1 domain occupies 100 to 297 (APITLLISFS…IINTIADLLT (198 aa)).

It belongs to the binding-protein-dependent transport system permease family. OppBC subfamily. In terms of assembly, the complex is composed of two ATP-binding proteins (NikD and NikE), two transmembrane proteins (NikB and NikC) and a solute-binding protein (NikA).

It is found in the cell membrane. In terms of biological role, part of the ABC transporter complex NikABCDE (Opp2) involved in nickel import. Probably responsible for the translocation of the substrate across the membrane. This is Nickel import system permease protein NikB from Staphylococcus aureus (strain USA300).